The chain runs to 512 residues: Retinaldehyde dehydrogenase 3 (512 aa).

The tract at residues 1-22 (MATANGAVENGQPDRKPPALPR) is disordered. The residue at position 2 (A2) is an N-acetylalanine. NAD(+) contacts are provided by residues K204, E207, and 257–262 (GSTEVG). Residue E280 is the Proton acceptor of the active site. C314 serves as the catalytic Nucleophile. Positions 361 and 411 each coordinate NAD(+).

Belongs to the aldehyde dehydrogenase family. Homotetramer. In terms of tissue distribution, expressed at low levels in many tissues and at higher levels in salivary gland, stomach, and kidney.

The protein resides in the cytoplasm. It catalyses the reaction all-trans-retinal + NAD(+) + H2O = all-trans-retinoate + NADH + 2 H(+). The enzyme catalyses retinal + NAD(+) + H2O = retinoate + NADH + 2 H(+). The catalysed reaction is all-trans-13,14-dihydroretinal + NAD(+) + H2O = all-trans-13,14-dihydroretinoate + NADH + 2 H(+). Its pathway is cofactor metabolism; retinol metabolism. In terms of biological role, catalyzes the NAD-dependent oxidation of aldehyde substrates, such as all-trans-retinal and all-trans-13,14-dihydroretinal, to their corresponding carboxylic acids, all-trans-retinoate and all-trans-13,14-dihydroretinoate, respectively. High specificity for all-trans-retinal as substrate, can also accept acetaldehyde as substrate in vitro but with lower affinity. Required for the biosynthesis of normal levels of retinoate in the embryonic ocular and nasal regions; a critical lipid in the embryonic development of the eye and the nasal region. The polypeptide is Retinaldehyde dehydrogenase 3 (ALDH1A3) (Homo sapiens (Human)).